The primary structure comprises 574 residues: Phosphoenolpyruvate-protein phosphotransferase (574 aa).

His-190 serves as the catalytic Tele-phosphohistidine intermediate. Phosphoenolpyruvate-binding residues include Arg-297 and Arg-333. Mg(2+)-binding residues include Glu-432 and Asp-456. Phosphoenolpyruvate contacts are provided by residues 455-456 (ND) and Arg-466. Cys-503 acts as the Proton donor in catalysis.

The protein belongs to the PEP-utilizing enzyme family. In terms of assembly, homodimer. It depends on Mg(2+) as a cofactor.

The protein resides in the cytoplasm. The catalysed reaction is L-histidyl-[protein] + phosphoenolpyruvate = N(pros)-phospho-L-histidyl-[protein] + pyruvate. Its function is as follows. General (non sugar-specific) component of the phosphoenolpyruvate-dependent sugar phosphotransferase system (sugar PTS). This major carbohydrate active-transport system catalyzes the phosphorylation of incoming sugar substrates concomitantly with their translocation across the cell membrane. Enzyme I transfers the phosphoryl group from phosphoenolpyruvate (PEP) to the phosphoryl carrier protein (HPr). The sequence is that of Phosphoenolpyruvate-protein phosphotransferase (ptsI) from Latilactobacillus sakei (Lactobacillus sakei).